The sequence spans 392 residues: Protein FAM185A (392 aa).

The segment at 39-60 (YSSGGSERWPGSETEVPPPGPG) is disordered.

The chain is Protein FAM185A (FAM185A) from Homo sapiens (Human).